Here is a 255-residue protein sequence, read N- to C-terminus: Ornithine decarboxylase antizyme (255 aa).

It belongs to the ODC antizyme family. In terms of assembly, interacts with ODC and thereby sterically blocks ODC homodimerization.

Functionally, ornithine decarboxylase (ODC) antizyme protein that negatively regulates ODC activity and intracellular polyamine biosynthesis in response to increased intracellular polyamine levels. Binds to ODC monomers, inhibiting the assembly of the functional ODC homodimer, and targets the monomers for ubiquitin-independent proteolytic destruction by the 26S proteasome. The protein is Ornithine decarboxylase antizyme (OAZ1) of Eremothecium gossypii (strain ATCC 10895 / CBS 109.51 / FGSC 9923 / NRRL Y-1056) (Yeast).